The primary structure comprises 611 residues: tRNA uridine 5-carboxymethylaminomethyl modification enzyme MnmG (611 aa).

14 to 19 (GAGHAG) serves as a coordination point for FAD. Position 274-288 (274-288 (GPRYCPSIEDKIVKF)) interacts with NAD(+).

Belongs to the MnmG family. In terms of assembly, homodimer. Heterotetramer of two MnmE and two MnmG subunits. FAD serves as cofactor.

The protein resides in the cytoplasm. Its function is as follows. NAD-binding protein involved in the addition of a carboxymethylaminomethyl (cmnm) group at the wobble position (U34) of certain tRNAs, forming tRNA-cmnm(5)s(2)U34. The sequence is that of tRNA uridine 5-carboxymethylaminomethyl modification enzyme MnmG from Chlamydia caviae (strain ATCC VR-813 / DSM 19441 / 03DC25 / GPIC) (Chlamydophila caviae).